The sequence spans 95 residues: Co-chaperonin GroES (95 aa).

It belongs to the GroES chaperonin family. In terms of assembly, heptamer of 7 subunits arranged in a ring. Interacts with the chaperonin GroEL.

The protein resides in the cytoplasm. Its function is as follows. Together with the chaperonin GroEL, plays an essential role in assisting protein folding. The GroEL-GroES system forms a nano-cage that allows encapsulation of the non-native substrate proteins and provides a physical environment optimized to promote and accelerate protein folding. GroES binds to the apical surface of the GroEL ring, thereby capping the opening of the GroEL channel. In Staphylococcus saprophyticus subsp. saprophyticus (strain ATCC 15305 / DSM 20229 / NCIMB 8711 / NCTC 7292 / S-41), this protein is Co-chaperonin GroES.